A 119-amino-acid chain; its full sequence is UPF0102 protein SGR_1878 (119 aa).

The protein belongs to the UPF0102 family.

The protein is UPF0102 protein SGR_1878 of Streptomyces griseus subsp. griseus (strain JCM 4626 / CBS 651.72 / NBRC 13350 / KCC S-0626 / ISP 5235).